Reading from the N-terminus, the 276-residue chain is Orotidine 5'-phosphate decarboxylase (276 aa).

Lys-96 acts as the Proton donor in catalysis.

It belongs to the OMP decarboxylase family. Type 2 subfamily.

It catalyses the reaction orotidine 5'-phosphate + H(+) = UMP + CO2. Its pathway is pyrimidine metabolism; UMP biosynthesis via de novo pathway; UMP from orotate: step 2/2. The polypeptide is Orotidine 5'-phosphate decarboxylase (Porphyromonas gingivalis (strain ATCC 33277 / DSM 20709 / CIP 103683 / JCM 12257 / NCTC 11834 / 2561)).